The following is a 485-amino-acid chain: Trk system potassium uptake protein TrkH (485 aa).

Topologically, residues 1-2 (MQ) are cytoplasmic. Residues 3-29 (FRSIIRIVGLLLALFSVTMLAPALVAL) traverse the membrane as a helical segment. Over 30-35 (LYRDGA) the chain is Periplasmic. A helical membrane pass occupies residues 36–57 (GVPFVTTFFVLLFCGAMCWFPN). Residues 58 to 65 (RRHKHELK) are Cytoplasmic-facing. A helical membrane pass occupies residues 66–90 (SRDGFLIVVLFWTVLGSAGSLPFLI). Positions 98–109 (VTDAFFESFSAL) form an intramembrane region, helical; Pore-forming. The stretch at 110–115 (TTTGAT) is an intramembrane region. Residues 110-115 (TTTGAT) are selectivity filter part 1. Residues threonine 111 and threonine 112 each contribute to the K(+) site. Residues 116–124 (VIVGLDELP) lie on the Periplasmic side of the membrane. Residues 125 to 150 (KAILFYRQFLQWFGGMGIIVLAVAIL) traverse the membrane as a helical segment. Over 151–177 (PVLGIGGMQLYRAEIPGPVKDTKMTPR) the chain is Cytoplasmic. The helical transmembrane segment at 178 to 202 (IAETAKALWYIYLSLTIACAVAFWL) threads the bilayer. Residues 203 to 205 (AGM) lie on the Periplasmic side of the membrane. An intramembrane region is located at residue threonine 206. An intramembrane region (helical; Pore-forming) is located at residues 207–218 (PFDAISHSFSTI). The stretch at 219–224 (AIGGFS) is an intramembrane region. The interval 219 to 224 (AIGGFS) is selectivity filter part 2. K(+)-binding residues include isoleucine 220 and glycine 221. Over 225–234 (THDASMGYFD) the chain is Periplasmic. The segment at residues 235–250 (SYAINLITVVFLLISA) is an intramembrane region (helical). The helical transmembrane segment at 276–296 (FRAFIFIQVLLFLVCFLLLLK) threads the bilayer. Positions 303–318 (PYDAFDQALFQTVSIS) form an intramembrane region, helical; Pore-forming. An intramembrane segment occupies 319 to 324 (TTAGFT). The interval 319–324 (TTAGFT) is selectivity filter part 3. Positions 320 and 321 each coordinate K(+). Topologically, residues 325-332 (TTGFADWP) are periplasmic. Positions 333-344 (LFLPVLLLFSSF) form an intramembrane region, helical. An intramembrane region (note=Loop between two helices) is located at residues 345 to 357 (IGGCAGSTGGGMK). A helical membrane pass occupies residues 392–419 (PQRVVDAVWGFFSAYALVFVVCMLGLIA). Over 420 to 421 (TG) the chain is Periplasmic. Residues 422–423 (MD) lie within the membrane without spanning it. The helical; Pore-forming intramembrane region spans 424–434 (ELSAFSAVAAT). An intramembrane segment occupies 435–441 (LNNLGPG). The selectivity filter part 4 stretch occupies residues 436 to 441 (NNLGPG). K(+) contacts are provided by asparagine 437 and leucine 438. Topologically, residues 442–453 (LGEVALHFGDVN) are periplasmic. Residues 454 to 465 (DKAKWVLIVSML) constitute an intramembrane region (helical).

It belongs to the TrkH potassium transport family. Homodimer.

It is found in the cell inner membrane. Low-affinity potassium transport system. Interacts with trk system potassium uptake protein TrkA and requires TrkE for transport activity. Selective for permeation of potassium ion and rubidium ion over smaller ions such as natrium or litium. In Vibrio parahaemolyticus serotype O3:K6 (strain RIMD 2210633), this protein is Trk system potassium uptake protein TrkH.